A 524-amino-acid chain; its full sequence is MQCSIKQILSDATDKLNKIGISSPQLEARILLQHVINKPIEYLLINLDEQLNEAKIEAFEKLLARRLKHEPIVYITGVKEFYSREFIVNKHVLIPRSDTEVLVDVVFQCHSRESGNPEKKQPNPCFRGNDISENCNDKFLNILELGTGSGCIAISLLCELPNANVIATDISLDAIDIIKSNAAKYEVTDRIQIIHSNWFENIETQKFDFIVSNPPYIAHSEKSEMAIETINYEPSIALFAEKDGLQAYFLIAENAKQFLKPNGKIILEIGFKQEEAVTQIFLDHGYNIESVYKDLQGHSRVILFSPINLNRSYARRIGKSLSGVQKNLLDNKLPKYLFSKEKLVNEKRKVFLEIGFGMGEHFINQAKMNPNALFIGIEVYLNGVANVLKLAGEQNITNFLLFPNNLDLILNEIPSNSLDGIYILFPDPWIKNKQKKKRIFNKERLKLLQDKLKDNGNLVFASDIENYFYEAIELIQQNGNFEIINKNDYLKPHDNYVITKYHQKAIKANRTPKFMILRHVLGDH.

Residues 1–306 (MQCSIKQILS…GHSRVILFSP (306 aa)) are hemK. The RF MTase stretch occupies residues 1-308 (MQCSIKQILS…SRVILFSPIN (308 aa)). Residues 146-150 (GTGSG), Asp-169, Trp-198, Asn-213, Glu-353, Glu-378, Asn-405, and Asp-427 contribute to the S-adenosyl-L-methionine site. A substrate-binding site is contributed by 213–216 (NPPY). Residues 307 to 524 (INLNRSYARR…MILRHVLGDH (218 aa)) are tRNA (guanine-N(7)-)-methyltransferase. Residues 311-524 (RSYARRIGKS…MILRHVLGDH (214 aa)) are tRNA MTase. Asp-427 is a catalytic residue. Substrate-binding residues include Lys-431 and Asp-463.

In the C-terminal section; belongs to the class I-like SAM-binding methyltransferase superfamily. TrmB family. It in the N-terminal section; belongs to the protein N5-glutamine methyltransferase family. PrmC subfamily.

It catalyses the reaction L-glutaminyl-[peptide chain release factor] + S-adenosyl-L-methionine = N(5)-methyl-L-glutaminyl-[peptide chain release factor] + S-adenosyl-L-homocysteine + H(+). The enzyme catalyses guanosine(46) in tRNA + S-adenosyl-L-methionine = N(7)-methylguanosine(46) in tRNA + S-adenosyl-L-homocysteine. Its function is as follows. Methylates the class 1 translation termination release factors RF1/PrfA and RF2/PrfB on the glutamine residue of the universally conserved GGQ motif. Functionally, catalyzes the formation of N(7)-methylguanine at position 46 (m7G46) in tRNA. This Rickettsia conorii (strain ATCC VR-613 / Malish 7) protein is Bifunctional methyltransferase (prmC/trmB).